The following is a 210-amino-acid chain: Putative 4-hydroxy-4-methyl-2-oxoglutarate aldolase (210 aa).

Residues 87-90 (GDFV) and Arg-109 each bind substrate. Residue Asp-110 participates in a divalent metal cation binding.

It belongs to the class II aldolase/RraA-like family. In terms of assembly, homotrimer. A divalent metal cation serves as cofactor.

The catalysed reaction is 4-hydroxy-4-methyl-2-oxoglutarate = 2 pyruvate. The enzyme catalyses oxaloacetate + H(+) = pyruvate + CO2. Functionally, catalyzes the aldol cleavage of 4-hydroxy-4-methyl-2-oxoglutarate (HMG) into 2 molecules of pyruvate. Also contains a secondary oxaloacetate (OAA) decarboxylase activity due to the common pyruvate enolate transition state formed following C-C bond cleavage in the retro-aldol and decarboxylation reactions. This Halalkalibacterium halodurans (strain ATCC BAA-125 / DSM 18197 / FERM 7344 / JCM 9153 / C-125) (Bacillus halodurans) protein is Putative 4-hydroxy-4-methyl-2-oxoglutarate aldolase.